The sequence spans 509 residues: Maturase K (509 aa).

It belongs to the intron maturase 2 family. MatK subfamily.

The protein localises to the plastid. It localises to the chloroplast. Its function is as follows. Usually encoded in the trnK tRNA gene intron. Probably assists in splicing its own and other chloroplast group II introns. The chain is Maturase K from Ibicella lutea (Yellow unicorn-plant).